We begin with the raw amino-acid sequence, 377 residues long: GTPase Obg (377 aa).

An Obg domain is found at 1-159 (MKFVDEATIE…RRLRMELKVL (159 aa)). Positions 127 to 148 (NIHFKSSTNRAPRQWTPGKEGE) are disordered. An OBG-type G domain is found at 160–336 (ADVGLLGLPN…LIWALQDYLD (177 aa)). Residues 166–173 (GLPNAGKS), 191–195 (FTTLH), 213–216 (DIPG), 288–291 (NKLD), and 317–319 (SGL) contribute to the GTP site. Positions 173 and 193 each coordinate Mg(2+). The tract at residues 339-377 (KRKDQDAQDQADGTYVFEDPRFDASRGGAAPATPPGGDE) is disordered.

This sequence belongs to the TRAFAC class OBG-HflX-like GTPase superfamily. OBG GTPase family. As to quaternary structure, monomer. Requires Mg(2+) as cofactor.

It is found in the cytoplasm. In terms of biological role, an essential GTPase which binds GTP, GDP and possibly (p)ppGpp with moderate affinity, with high nucleotide exchange rates and a fairly low GTP hydrolysis rate. Plays a role in control of the cell cycle, stress response, ribosome biogenesis and in those bacteria that undergo differentiation, in morphogenesis control. The sequence is that of GTPase Obg from Bordetella bronchiseptica (strain ATCC BAA-588 / NCTC 13252 / RB50) (Alcaligenes bronchisepticus).